A 394-amino-acid polypeptide reads, in one-letter code: MSKEKFERTKPHVNVGTIGHVDHGKTTLTAAITTVLAKTYGGSARAFDQIDNAPEEKARGITINTSHVEYDTPARHYAHVDCPGHADYVKNMITGAAQMDGAILVVAATDGPMPQTREHILLGRQVGVPYIIVFLNKCDMVDDEELLELVEMEVRELLSQYDFPGDDTPVIRGSALKALEGDAEWEAKIIELAEALDSYIPQPERAIDRPFLLPIEDVFSISGRGTVVTGRVERGIVKVGEEVEIVGIIDTIKTTCTGVEMFRKLLDEGRAGENVGVLLRGTKRDDVQRGQVLAKPGSIKPHTKFESEVYILSKDEGGRHTPFFKGYRPQFYFRTIDVTGTIELPEGVEMVMPGDNVNMVVNLIAPIAMDDGLRFAIREGGRTVGAGVVAKVIE.

Positions 10 to 204 constitute a tr-type G domain; sequence KPHVNVGTIG…ALDSYIPQPE (195 aa). The tract at residues 19 to 26 is G1; the sequence is GHVDHGKT. Position 19 to 26 (19 to 26) interacts with GTP; it reads GHVDHGKT. Thr26 contributes to the Mg(2+) binding site. The tract at residues 60 to 64 is G2; it reads GITIN. The G3 stretch occupies residues 81–84; it reads DCPG. Residues 81–85 and 136–139 contribute to the GTP site; these read DCPGH and NKCD. A G4 region spans residues 136-139; that stretch reads NKCD. The interval 174–176 is G5; it reads SAL.

Belongs to the TRAFAC class translation factor GTPase superfamily. Classic translation factor GTPase family. EF-Tu/EF-1A subfamily. As to quaternary structure, monomer.

It is found in the cytoplasm. It catalyses the reaction GTP + H2O = GDP + phosphate + H(+). Functionally, GTP hydrolase that promotes the GTP-dependent binding of aminoacyl-tRNA to the A-site of ribosomes during protein biosynthesis. This chain is Elongation factor Tu 1, found in Yersinia pestis bv. Antiqua (strain Nepal516).